A 294-amino-acid polypeptide reads, in one-letter code: Dolichol-phosphate mannosyltransferase (294 aa).

Positions 1–27 (MSIALDMDASAKMRKQPGSSGWSTSST) are disordered. Residues 1–263 (MSIALDMDAS…QQLVELYRFR (263 aa)) are Cytoplasmic-facing. Residues 17-27 (PGSSGWSTSST) are compositionally biased toward low complexity. GDP-alpha-D-mannose contacts are provided by P35, E39, V70, D72, D123, A124, D125, Q127, R151, K211, R237, and K243. Residues D125 and Q127 each coordinate Mg(2+). Mn(2+) is bound by residues D125 and Q127. The helical transmembrane segment at 264–284 (FGTVPIVFVLIVLLVLALYIW) threads the bilayer. Residues 285 to 294 (SHVLAPMLGA) are Lumenal-facing.

Belongs to the glycosyltransferase 2 family. Requires Mg(2+) as cofactor. The cofactor is Mn(2+). It depends on Ca(2+) as a cofactor.

It localises to the endoplasmic reticulum membrane. The enzyme catalyses a di-trans,poly-cis-dolichyl phosphate + GDP-alpha-D-mannose = a di-trans,poly-cis-dolichyl beta-D-mannosyl phosphate + GDP. It functions in the pathway protein modification; protein glycosylation. Functionally, transfers mannose from GDP-mannose to dolichol monophosphate to form dolichol phosphate mannose (Dol-P-Man) which is the mannosyl donor in pathways leading to N-glycosylation, glycosyl phosphatidylinositol membrane anchoring, and O-mannosylation of proteins. This is Dolichol-phosphate mannosyltransferase (DPM1) from Mycosarcoma maydis (Corn smut fungus).